We begin with the raw amino-acid sequence, 136 residues long: Large ribosomal subunit protein uL16 (136 aa).

The protein belongs to the universal ribosomal protein uL16 family. As to quaternary structure, part of the 50S ribosomal subunit.

Binds 23S rRNA and is also seen to make contacts with the A and possibly P site tRNAs. The sequence is that of Large ribosomal subunit protein uL16 from Rickettsia canadensis (strain McKiel).